A 453-amino-acid polypeptide reads, in one-letter code: Gastrin/cholecystokinin type B receptor (453 aa).

Over 1–57 (MDLLKLNRSLQGPGPGSGSSLCRPGVSLLNSSSAGNLSCETPRIRGTGTRELELTIR) the chain is Extracellular. Residues N7, N30, and N36 are each glycosylated (N-linked (GlcNAc...) asparagine). A helical membrane pass occupies residues 58–79 (ITLYAVIFLMSVGGNVLIIVVL). The Cytoplasmic segment spans residues 80-87 (GLSRRLRT). Residues 88–109 (VTNAFLLSLAVSDLLLAVACMP) form a helical membrane-spanning segment. Over 110-131 (FTLLPNLMGTFIFGTVICKAVS) the chain is Extracellular. Residues C127 and C205 are joined by a disulfide bond. The helical transmembrane segment at 132–150 (YLMGVSVSVSTLNLAAIAL) threads the bilayer. Residues 151–170 (ERYSAICRPLQARVWQTRSH) lie on the Cytoplasmic side of the membrane. A helical transmembrane segment spans residues 171-189 (AARVILATWLLSGLLMVPY). Topologically, residues 190–219 (PVYTVVQPVGPRILQCMHLWPSERVQQMWS) are extracellular. Residues 220–242 (VLLLILLFFIPGVVMAVAYGLIS) form a helical membrane-spanning segment. Residues 243-339 (RELYLGLRFD…KLLAKKRVVR (97 aa)) are Cytoplasmic-facing. The interval 257 to 276 (SETQSRVRNQGGLPGGAAAP) is disordered. A helical membrane pass occupies residues 340 to 361 (MLLVIVLLFFVCWLPVYSANTW). The Extracellular portion of the chain corresponds to 362-379 (RAFDGPGARRALAGAPIS). A helical membrane pass occupies residues 380 to 400 (FIHLLSYTSACANPLVYCFMH). Residues 401 to 453 (RRFRQACLDTCARCCPRPPRARPRPLPDEDPPTPSIASLSRLSYTTISTLGPG) lie on the Cytoplasmic side of the membrane. C414 is lipidated: S-palmitoyl cysteine.

It belongs to the G-protein coupled receptor 1 family.

The protein localises to the cell membrane. In terms of biological role, receptor for gastrin and cholecystokinin. The CCK-B receptors occur throughout the central nervous system where they modulate anxiety, analgesia, arousal, and neuroleptic activity. This receptor mediates its action by association with G proteins that activate a phosphatidylinositol-calcium second messenger system. The protein is Gastrin/cholecystokinin type B receptor (Cckbr) of Mus musculus (Mouse).